The sequence spans 245 residues: MSQSTSVLRRNGFTFKQFFVAHDRCAMKVGTDGILLGAWAPVAGVKRCLDIGAGSGLLALMLAQRTDDSVMIDAVELESEAAAQAQENINQSPWAERINVHTADIQQWITQQTVRFDLIISNPPYYQQGVECSTPQREQARYTTTLDHPSLLACAAECITEEGFFCVVLPEQIGNGFTELALSMGWHLRLRTDVAENEARLPHRVLLAFSPKAGECFSDRLIIRGSDQNYSEAYTALTQAFYLFM.

Belongs to the methyltransferase superfamily. tRNA (adenine-N(6)-)-methyltransferase family.

The protein localises to the cytoplasm. The enzyme catalyses adenosine(37) in tRNA1(Val) + S-adenosyl-L-methionine = N(6)-methyladenosine(37) in tRNA1(Val) + S-adenosyl-L-homocysteine + H(+). Functionally, specifically methylates the adenine in position 37 of tRNA(1)(Val) (anticodon cmo5UAC). The chain is tRNA1(Val) (adenine(37)-N6)-methyltransferase from Shigella dysenteriae serotype 1 (strain Sd197).